Consider the following 279-residue polypeptide: Movement protein (279 aa).

A disordered region spans residues 255–279 (SPPFAIGSPSASRNNSFRSQVVNGL). A compositionally biased stretch (polar residues) spans 263–279 (PSASRNNSFRSQVVNGL).

Belongs to the cucumovirus movement protein family.

It localises to the host cell junction. The protein localises to the host plasmodesma. Functionally, transports viral genome to neighboring plant cells directly through plasmosdesmata, without any budding. The movement protein allows efficient cell to cell propagation, by bypassing the host cell wall barrier. Acts by forming a tubular structure at the host plasmodesmata, enlarging it enough to allow free passage of virion capsids. The protein is Movement protein of Cucumis sativus (Cucumber).